Reading from the N-terminus, the 368-residue chain is Ferredoxin--NADP reductase (368 aa).

Residues Asp-56, Gln-64, Tyr-69, Val-109, Phe-144, Asp-310, and Thr-351 each contribute to the FAD site.

It belongs to the ferredoxin--NADP reductase type 2 family. Homodimer. FAD is required as a cofactor.

It catalyses the reaction 2 reduced [2Fe-2S]-[ferredoxin] + NADP(+) + H(+) = 2 oxidized [2Fe-2S]-[ferredoxin] + NADPH. In Leptothrix cholodnii (strain ATCC 51168 / LMG 8142 / SP-6) (Leptothrix discophora (strain SP-6)), this protein is Ferredoxin--NADP reductase.